Here is a 226-residue protein sequence, read N- to C-terminus: Charged multivesicular body protein 5 (226 aa).

Positions 21–93 form a coiled coil; the sequence is IAGVDARATN…NQSFNMEQAN (73 aa). Basic and acidic residues predominate over residues 188–198; it reads KAPEAPSREPG. Residues 188-226 form a disordered region; it reads KAPEAPSREPGADSIVPGKSTIETDEFGLPKIPTSLKTT. Ser-201 carries the phosphoserine modification. Residue Thr-226 is modified to Phosphothreonine.

This sequence belongs to the SNF7 family. Probable peripherally associated component of the endosomal sorting required for transport complex III (ESCRT-III).

It localises to the endosome membrane. Its function is as follows. Probable peripherally associated component of the endosomal sorting required for transport complex III (ESCRT-III) which is involved in multivesicular bodies (MVBs) formation and sorting of endosomal cargo proteins into MVBs. MVBs contain intraluminal vesicles (ILVs) that are generated by invagination and scission from the limiting membrane of the endosome and are delivered to lysosomes enabling degradation of membrane proteins. Specifically down-regulates Notch signaling activity in the germarium, probably by facilitating Notch endocytosis. The chain is Charged multivesicular body protein 5 from Drosophila melanogaster (Fruit fly).